The primary structure comprises 121 residues: Basic phospholipase A2 BbTX-III (121 aa).

Ca(2+)-binding residues include Tyr27, Gly29, and Gly31. 6 disulfides stabilise this stretch: Cys28/Cys44, Cys43/Cys95, Cys49/Cys121, Cys50/Cys88, Cys58/Cys82, and Cys76/Cys86. Residue His47 is part of the active site. Asp48 is a binding site for Ca(2+). Asp89 is an active-site residue.

It belongs to the phospholipase A2 family. Group II subfamily. D49 sub-subfamily. As to quaternary structure, homodimer; non-covalently linked. It depends on Ca(2+) as a cofactor. In terms of tissue distribution, expressed by the venom gland.

The protein localises to the secreted. It catalyses the reaction a 1,2-diacyl-sn-glycero-3-phosphocholine + H2O = a 1-acyl-sn-glycero-3-phosphocholine + a fatty acid + H(+). In terms of biological role, snake venom phospholipase A2 (PLA2) that exhibits myotoxin and anticoagulant activity. Displays edema-inducing activities in mouse paw. Also displays cytotoxic activity against some cell lines and myotubes, and antimicrobial activities against E.coli, C.albicans and Leishmania. PLA2 catalyzes the calcium-dependent hydrolysis of the 2-acyl groups in 3-sn-phosphoglycerides. The chain is Basic phospholipase A2 BbTX-III from Bothrops brazili (Brazil's lancehead).